The sequence spans 350 residues: Arginine N-succinyltransferase (350 aa).

L125 contacts succinyl-CoA. The active-site Proton donor is H229.

This sequence belongs to the arginine N-succinyltransferase family.

The enzyme catalyses succinyl-CoA + L-arginine = N(2)-succinyl-L-arginine + CoA + H(+). It functions in the pathway amino-acid degradation; L-arginine degradation via AST pathway; L-glutamate and succinate from L-arginine: step 1/5. Catalyzes the transfer of succinyl-CoA to arginine to produce N(2)-succinylarginine. This Yersinia pseudotuberculosis serotype O:3 (strain YPIII) protein is Arginine N-succinyltransferase.